The chain runs to 167 residues: Photosystem II extrinsic protein V (167 aa).

Residues 1-30 (MVFKTLRRTLWLTLAALLAVFQFNLGAAQA) form the signal peptide. Cys67, Cys70, His71, and His122 together coordinate heme c.

The protein belongs to the cytochrome c family. PsbV subfamily. In terms of assembly, PSII is composed of 1 copy each of membrane proteins PsbA, PsbB, PsbC, PsbD, PsbE, PsbF, PsbH, PsbI, PsbJ, PsbK, PsbL, PsbM, PsbT, PsbX, PsbY, PsbZ, Psb30/Ycf12, peripheral proteins PsbO, CyanoQ (PsbQ), PsbU, PsbV and a large number of cofactors. It forms dimeric complexes. It depends on heme c as a cofactor.

Its subcellular location is the cellular thylakoid membrane. Functionally, one of the extrinsic, lumenal subunits of photosystem II (PSII). PSII is a light-driven water plastoquinone oxidoreductase, using light energy to abstract electrons from H(2)O, generating a proton gradient subsequently used for ATP formation. The extrinsic proteins stabilize the structure of photosystem II oxygen-evolving complex (OEC), the ion environment of oxygen evolution and protect the OEC against heat-induced inactivation. Low-potential cytochrome c that plays a role in the OEC of PSII. The polypeptide is Photosystem II extrinsic protein V (Synechococcus elongatus (strain ATCC 33912 / PCC 7942 / FACHB-805) (Anacystis nidulans R2)).